A 369-amino-acid chain; its full sequence is Biglycan (369 aa).

The first 16 residues, 1–16 (MCPLWLLAALLALSQA), serve as a signal peptide directing secretion. Residues 17–37 (LPFEQKAFWDFTLDDGLPMLN) constitute a propeptide that is removed on maturation. O-linked (Xyl...) (glycosaminoglycan) serine glycosylation is found at serine 42 and serine 48. Intrachain disulfides connect cysteine 64-cysteine 70 and cysteine 68-cysteine 77. LRR repeat units lie at residues 83–103 (KAVP…NNDI), 104–127 (SELR…NNKI), 128–151 (SKIH…KNHL), 152–172 (VEIP…DNRI), 173–196 (RKVP…GNPL), 197–221 (ENSG…EAKL), 222–242 (TGIP…HNKI), 243–266 (QAIE…HNQI), 267–290 (RMIE…NNKL), 291–313 (SRVP…TNNI), 314–343 (TKVG…NNPV), and 344–369 (PYWE…NYKK). 2 N-linked (GlcNAc...) asparagine glycosylation sites follow: asparagine 271 and asparagine 312. Cysteine 322 and cysteine 355 are disulfide-bonded.

Belongs to the small leucine-rich proteoglycan (SLRP) family. SLRP class I subfamily. In terms of assembly, homodimer. Forms a ternary complex with MFAP2 and ELN. In terms of processing, the two attached glycosaminoglycan chains can be either chondroitin sulfate or dermatan sulfate. In terms of tissue distribution, found in several connective tissues, especially in articular cartilages.

Its subcellular location is the secreted. It is found in the extracellular space. The protein resides in the extracellular matrix. Functionally, may be involved in collagen fiber assembly. This chain is Biglycan (BGN), found in Ovis aries (Sheep).